A 504-amino-acid chain; its full sequence is Cytochrome P450 3A2 (504 aa).

Residue Cys-443 participates in heme binding.

The protein belongs to the cytochrome P450 family. Heme is required as a cofactor. As to expression, expressed in liver.

It localises to the endoplasmic reticulum membrane. Its subcellular location is the microsome membrane. The catalysed reaction is an organic molecule + reduced [NADPH--hemoprotein reductase] + O2 = an alcohol + oxidized [NADPH--hemoprotein reductase] + H2O + H(+). In terms of biological role, cytochromes P450 are a group of heme-thiolate monooxygenases. In liver microsomes, this enzyme is involved in an NADPH-dependent electron transport pathway. It oxidizes a variety of structurally unrelated compounds, including steroids, fatty acids, and xenobiotics. This Rattus norvegicus (Rat) protein is Cytochrome P450 3A2 (Cyp3a2).